The following is a 168-amino-acid chain: Sec-independent protein translocase protein TatB (168 aa).

The chain crosses the membrane as a helical span at residues 1 to 21; that stretch reads MIDLGISKLALIGAVALIVIG. Disordered stretches follow at residues 92 to 132 and 146 to 168; these read FDGS…QGAR and VQSGAARVKRHRPASGRNRSFFE. Over residues 94-107 the composition is skewed to low complexity; sequence GSASSSSSSDTGSG. Positions 117–126 are enriched in basic residues; sequence KSHNGRKSWR.

Belongs to the TatB family. The Tat system comprises two distinct complexes: a TatABC complex, containing multiple copies of TatA, TatB and TatC subunits, and a separate TatA complex, containing only TatA subunits. Substrates initially bind to the TatABC complex, which probably triggers association of the separate TatA complex to form the active translocon.

Its subcellular location is the cell inner membrane. Its function is as follows. Part of the twin-arginine translocation (Tat) system that transports large folded proteins containing a characteristic twin-arginine motif in their signal peptide across membranes. Together with TatC, TatB is part of a receptor directly interacting with Tat signal peptides. TatB may form an oligomeric binding site that transiently accommodates folded Tat precursor proteins before their translocation. This is Sec-independent protein translocase protein TatB from Cupriavidus metallidurans (strain ATCC 43123 / DSM 2839 / NBRC 102507 / CH34) (Ralstonia metallidurans).